A 60-amino-acid chain; its full sequence is Large ribosomal subunit protein uL30 (60 aa).

Belongs to the universal ribosomal protein uL30 family. In terms of assembly, part of the 50S ribosomal subunit.

This Desulfitobacterium hafniense (strain DSM 10664 / DCB-2) protein is Large ribosomal subunit protein uL30.